Consider the following 353-residue polypeptide: Outer membrane protein P2 (353 aa).

The N-terminal stretch at 1–20 is a signal peptide; that stretch reads MKKTLAALIVGAFAASAANA.

The protein belongs to the Gram-negative porin family. In terms of assembly, homotrimer.

It is found in the cell outer membrane. Forms pores that allow passive diffusion of small molecules across the outer membrane. The chain is Outer membrane protein P2 (ompP2) from Haemophilus influenzae.